The sequence spans 1028 residues: SWI/SNF-related matrix-associated actin-dependent regulator of chromatin subfamily A containing DEAD/H box 1 (1028 aa).

An N-acetylmethionine modification is found at methionine 1. The segment at 13–81 (KRNKIEEAPE…PENDRKASIS (69 aa)) is disordered. The residue at position 54 (threonine 54) is a Phosphothreonine. Position 57 is a phosphoserine (serine 57). At threonine 71 the chain carries Phosphothreonine. Lysine 77 participates in a covalent cross-link: Glycyl lysine isopeptide (Lys-Gly) (interchain with G-Cter in SUMO2). A Phosphoserine modification is found at serine 79. Residue lysine 84 forms a Glycyl lysine isopeptide (Lys-Gly) (interchain with G-Cter in SUMO2) linkage. Phosphoserine occurs at positions 124, 127, 132, and 153. Residues 158–200 (YSDNLSTVRQTRYSENLSSDLLKLIDSTSTMDGAIAAALLMFG) enclose the CUE 1 domain. Disordered regions lie at residues 204 to 253 (GGGP…NWEK) and 303 to 348 (ASPS…KRKK). Phosphoserine occurs at positions 213, 216, 241, and 244. Residues 253–296 (KQESIVLKLQKEFPNFDKEELREVLKEHEWMYTEALESLKVFAE) enclose the CUE 2 domain. The residue at position 304 (serine 304) is a Phosphoserine. Residues lysine 337 and lysine 473 each participate in a glycyl lysine isopeptide (Lys-Gly) (interchain with G-Cter in SUMO2) cross-link. Residues 511 to 679 (ALVHKHGLNG…MSLLNFVMPH (169 aa)) enclose the Helicase ATP-binding domain. 523–531 (ADEMGLGKT) serves as a coordination point for ATP. The DEGH box motif lies at 630–633 (DEGH). The Nuclear localization signal motif lies at 723–740 (RRVKEEVLKQLPPKKDRI). Lysine 726 is covalently cross-linked (Glycyl lysine isopeptide (Lys-Gly) (interchain with G-Cter in SUMO2)). In terms of domain architecture, Helicase C-terminal spans 860–1012 (VLGCILSELK…MTTVDEGDEG (153 aa)). An ATP-binding site is contributed by 899–906 (YLRLDGKT). Residue lysine 998 forms a Glycyl lysine isopeptide (Lys-Gly) (interchain with G-Cter in SUMO2) linkage. The short motif at 1007–1010 (DEGD) is the DEAD box element.

The protein belongs to the SNF2/RAD54 helicase family. Binds to DNA preferentially in the vicinity of transcriptional start sites. Interacts with MSH2 and TRIM28. Part of a complex composed of TRIM28, HDAC1, HDAC2 and EHMT2. Interacts with PCNA.

Its subcellular location is the nucleus. It is found in the chromosome. The enzyme catalyses ATP + H2O = ADP + phosphate + H(+). In terms of biological role, DNA helicase that possesses intrinsic ATP-dependent nucleosome-remodeling activity and is both required for DNA repair and heterochromatin organization. Promotes DNA end resection of double-strand breaks (DSBs) following DNA damage: probably acts by weakening histone DNA interactions in nucleosomes flanking DSBs. Required for the restoration of heterochromatin organization after replication. Acts at replication sites to facilitate the maintenance of heterochromatin by directing H3 and H4 histones deacetylation, H3 'Lys-9' trimethylation (H3K9me3) and restoration of silencing. This is SWI/SNF-related matrix-associated actin-dependent regulator of chromatin subfamily A containing DEAD/H box 1 (SMARCAD1) from Bos taurus (Bovine).